Consider the following 1201-residue polypeptide: MEKQDQTSREEILKKIMDSLGQDGVPSKTVLVGEAGIGKTWLAKEVSQRVTQEKYNVLWLHLNKKIEDEKSLYEILAAQLSIIYEFEEGEEPDELDYPLESLKEKIKEEMIKHKKDNLLLILDDEGSMTTEEDVMQELNLQDFLKEYSAVKILVTRRDEREEKESTTIKVGPLTEKESLDLLHDAEDLLTSFTSEDWPVLLKRLCDNKEIKEPTLMSCILSKSKGLPAAIVVLIKSLNSIKSMSAKQRKIFKELILSSKSLDEAAASKNAIDRSRYNPVLQLSYELLKPDETVKRPVIACFWHILDFYKYSGCAYYRDLIVHWMLEGYFDPVKSVDKAYQEGHSILMDFMNRGILKIQEDNMVVPEFSMSNLLDLQDCGFFGRSSLGFDRVYGGDKRKGLGKIILIDDMIQTIQSKKKNITTIIASGNRLRREVHGKFFEKPEMQDLEVVVLFEPTFHELVLSLSKLKKLRVLVIRDCDLIDNIDKLSGLQGLHVLEVSGASSLVNIPDDFFKNMTQLQSLNLSGLAIKSSPSTIEKLSMLRCFILRHCSELQDLPNFIVETRKLEVIDIHGARKLESYFDRVKDWKDYKGKNKNFAQLQLLEHLDFSETKIIRLPIFHLKDSTNDFSTMPILTRLLLRNCTRLKRLPQLRPLTNLQILDACGATDLVEMLEVCLEEKKELRILDMSKTSLPELADTIADVVNLNKLLLRNCSLIEELPSIEKLTHLEVFDVSGCIKLKNINGSFGEMSYLHEVNLSETNLSELPDKISELSNLKELIIRKCSKLKTLPNLEKLTNLEIFDVSGCTELETIEGSFENLSCLHKVNLSETNLGELPNKISELSNLKELILRNCSKLKALPNLEKLTHLVIFDVSGCTNLDKIEESFESMSYLCEVNLSGTNLKTFPELPKQSILCSSKRIVLADSSCIERDQWSQIKECLTSKSEGSSFSNVGEKTREKLLYHGNRYRVIDPEVPLNIDIVDIKRSTDLKTEYIAKAEYVSIAENGSKSVSSLFDELQMASVKGCWVERCKNMDVLFESDEQLEKEKSSSPSLQTLWISNLPLLTSLYSSKGGFIFKNLKKLSVDCCPSIKWLFPEIPDNLEILRVKFCDKLERLFEVKAGELSKLRKLHLLDLPVLSVLGANFPNLEKCTIEKCPKLKAREDEPRIGARITDEISEDQPHKNTIGPETQTPTQPTKATDTV.

33–40 (GEAGIGKT) serves as a coordination point for ATP. 14 LRR repeats span residues 469 to 491 (KLRV…SGLQ), 492 to 514 (GLHV…FFKN), 517 to 539 (QLQS…EKLS), 540 to 562 (MLRC…IVET), 680 to 701 (ELRI…IADV), 703 to 725 (NLNK…EKLT), 726 to 748 (HLEV…FGEM), 750 to 771 (YLHE…ISEL), 773 to 795 (NLKE…EKLT), 796 to 818 (NLEI…FENL), 820 to 841 (CLHK…ISEL), 843 to 865 (NLKE…EKLT), 866 to 888 (HLVI…FESM), and 890 to 911 (YLCE…PKQS). Positions 1162–1180 (DEPRIGARITDEISEDQPH) are enriched in basic and acidic residues. A disordered region spans residues 1162–1201 (DEPRIGARITDEISEDQPHKNTIGPETQTPTQPTKATDTV). Polar residues predominate over residues 1185-1201 (GPETQTPTQPTKATDTV).

The protein belongs to the disease resistance NB-LRR family.

Potential disease resistance protein. The protein is Putative disease resistance protein At4g19050 of Arabidopsis thaliana (Mouse-ear cress).